A 563-amino-acid chain; its full sequence is Type 2 DNA topoisomerase 6 subunit B (563 aa).

ATP contacts are provided by residues asparagine 46, aspartate 78, 99-100 (TK), 109-116 (GQQGIGIS), and lysine 471.

This sequence belongs to the TOP6B family. In terms of assembly, homodimer. Heterotetramer of two Top6A and two Top6B chains.

It carries out the reaction ATP-dependent breakage, passage and rejoining of double-stranded DNA.. Relaxes both positive and negative superturns and exhibits a strong decatenase activity. This chain is Type 2 DNA topoisomerase 6 subunit B, found in Thermococcus onnurineus (strain NA1).